Consider the following 124-residue polypeptide: Cytoinsectotoxin-4 (124 aa).

Positions 1-19 are cleaved as a signal peptide; that stretch reads MKCFILAAALVLAFACIAA. Residues 20–62 constitute a propeptide that is removed on maturation; the sequence is SEPAETENEDLDDLSDLEDEEWLDELEEAAEYLESLREFEESR. Phe-123 is modified (phenylalanine amide).

Belongs to the cationic peptide 06 (cytoinsectotoxin) family. In terms of tissue distribution, expressed by the venom gland.

It localises to the secreted. Functionally, insecticidal and antimicrobial peptide. Has insecticidal activity against larvae of flesh fly S.carnaria. Has antibacterial activity against Gram-positive bacterium B.subtilis B-501 (MIC=2.5 uM) and Gram-negative bacterium E.coli DH5alpha (MIC=10 uM). The protein is Cytoinsectotoxin-4 of Lachesana tarabaevi (Spider).